A 314-amino-acid chain; its full sequence is (+)-neomenthol dehydrogenase (314 aa).

Residue 13-36 (VTGGNKGIGYETCRQLASKGVVVV) participates in NADP(+) binding. Residue Ser-183 coordinates substrate. Tyr-239 acts as the Proton acceptor in catalysis.

The protein belongs to the short-chain dehydrogenases/reductases (SDR) family. Monomer. In terms of tissue distribution, expressed in flowers and red fruit tissues. Not detected in leaves, stems, roots or green fruits.

The catalysed reaction is (+)-neomenthol + NADP(+) = (1R,4S)-menthone + NADPH + H(+). Involved in basal resistance against pathogens. This is (+)-neomenthol dehydrogenase (MNR1) from Capsicum annuum (Capsicum pepper).